Here is a 114-residue protein sequence, read N- to C-terminus: Iron-sulfur cluster insertion protein ErpA (114 aa).

Residues Cys-42, Cys-106, and Cys-108 each contribute to the iron-sulfur cluster site.

It belongs to the HesB/IscA family. In terms of assembly, homodimer. Iron-sulfur cluster is required as a cofactor.

Its function is as follows. Required for insertion of 4Fe-4S clusters for at least IspG. This chain is Iron-sulfur cluster insertion protein ErpA, found in Pseudoalteromonas atlantica (strain T6c / ATCC BAA-1087).